Reading from the N-terminus, the 442-residue chain is D-serine dehydratase (442 aa).

Lys118 is subject to N6-(pyridoxal phosphate)lysine.

This sequence belongs to the serine/threonine dehydratase family. DsdA subfamily. Monomer. Pyridoxal 5'-phosphate is required as a cofactor.

The catalysed reaction is D-serine = pyruvate + NH4(+). This is D-serine dehydratase from Shigella flexneri.